The primary structure comprises 923 residues: MSLSTTAFPSLQGENMSRSPIPRHRALLAGFCLAGALSAQAATQEEILDAALVSGDSSQLTDSHLVALRLQQQVERIRQTRTQLLDGLYQNLSQAYDPGAASMWVLPANPDNTLPFLIGDKGRVLASLSLEAGGRGLAYGTNVLTQLSGTNAAHAPLLKRAVQWLVNGDPGAATAKDFKVSVVGVDKTAALNGLKSAGLQPADAACNALTDASCASTSKLLVLGNGASAASLSATVRARLQAGLPILFVHTNGWNQSSTGQQILAGLGLQEGPYGGNYWDKDRVPSSRTRTRSVELGGAYGQDPALVQQIVDGSWRTDYDWSKCTSYVGRTTCDDVPGLSDFSKRVDVLKGALDAYNQKAQNLFALPGTTSLRLWLLWADAVRQNIRYPMDKAADTARFQETFVADAIVGYVREAGAAQKELGSYAGQRQQSMPVSGSEETLTLTLPSAQGFTAIGRMAAPGKRLSIRIEDAGQASLAVGLNTQRIGSTRLWNTRQYDRPRFLKSPDIKLQANQSVALVSPYGGLLQLVYSGATPGQTVTVKVTGAASQPFLDIQPGEDSSQAIADFIQALDADKADWLEIRSGSVEVHAKVEKVRGSIDKDYGGDVQRFIRELNEVFIDDAYTLAGFAIPNQAKTPAIQQECAARGWDCDSETLHKLPGTQHINVDQYAQCGGGCSGNPYDQTWGLNPRGWGESHELGHNLQVNRLKVYGGRSGEISNQIFPLHKDWRVLREFGQNLDDTRVNYRNAYNLIVAGRAEADPLAGVYKRLWEDPGTYALNGERMAFYTQWVHYWADLKNDPLQGWDIWTLLYLHQRQVDKSDWDANKAALGYGTYAQRPGNSGDASSTDGNDNLLLGLSWLTQRDQRPTFALWGIRTSAAAQAQVAAYGFAEQPAFFYANNRTNEYSTVKLLDMSQGSPAWPFP.

Positions 1–41 are cleaved as a signal peptide; that stretch reads MSLSTTAFPSLQGENMSRSPIPRHRALLAGFCLAGALSAQA. Residues 450–794 enclose the Peptidase M60 domain; that stretch reads QGFTAIGRMA…FYTQWVHYWA (345 aa). His-696 contributes to the Zn(2+) binding site. Glu-697 is an active-site residue. Position 700 (His-700) interacts with Zn(2+).

Belongs to the peptidase M88 family. It depends on Zn(2+) as a cofactor.

The protein localises to the secreted. Its activity is regulated as follows. Proteolytic activity is blocked in the presence of EDTA. Functionally, protease that degrades several proteins of the host immune system. Cleaves P-selectin glycoprotein ligand-1 (PSGL-1), leading to its functional inhibition; PSGL-1 is a leukocyte cell-surface receptor essential for leukocyte recruitment to the site of infection. Next to PSGL-1, targets host CD43 and CD44 that are also involved in leukocyte homing. Thus, prevents neutrophil extravasation and thereby protects P.aeruginosa from neutrophil attack. Is also able to inhibit the decay accelerating factor (CD55), but not the cell-surface receptors CD46 and CD31. The polypeptide is Immunomodulating metalloprotease (Pseudomonas aeruginosa (strain ATCC 15692 / DSM 22644 / CIP 104116 / JCM 14847 / LMG 12228 / 1C / PRS 101 / PAO1)).